The sequence spans 142 residues: SsrA-binding protein (142 aa).

This sequence belongs to the SmpB family.

Its subcellular location is the cytoplasm. In terms of biological role, required for rescue of stalled ribosomes mediated by trans-translation. Binds to transfer-messenger RNA (tmRNA), required for stable association of tmRNA with ribosomes. tmRNA and SmpB together mimic tRNA shape, replacing the anticodon stem-loop with SmpB. tmRNA is encoded by the ssrA gene; the 2 termini fold to resemble tRNA(Ala) and it encodes a 'tag peptide', a short internal open reading frame. During trans-translation Ala-aminoacylated tmRNA acts like a tRNA, entering the A-site of stalled ribosomes, displacing the stalled mRNA. The ribosome then switches to translate the ORF on the tmRNA; the nascent peptide is terminated with the 'tag peptide' encoded by the tmRNA and targeted for degradation. The ribosome is freed to recommence translation, which seems to be the essential function of trans-translation. The polypeptide is SsrA-binding protein (Mycoplasma mobile (strain ATCC 43663 / 163K / NCTC 11711) (Mesomycoplasma mobile)).